The chain runs to 180 residues: Oligoribonuclease (180 aa).

The 164-residue stretch at 7–170 folds into the Exonuclease domain; that stretch reads LIWIDLEMTG…DDIRESIAEL (164 aa). Tyrosine 128 is a catalytic residue.

It belongs to the oligoribonuclease family.

The protein resides in the cytoplasm. In terms of biological role, 3'-to-5' exoribonuclease specific for small oligoribonucleotides. In Pseudomonas putida (strain ATCC 700007 / DSM 6899 / JCM 31910 / BCRC 17059 / LMG 24140 / F1), this protein is Oligoribonuclease.